Here is a 189-residue protein sequence, read N- to C-terminus: Thioredoxin-like protein CITRX, chloroplastic (189 aa).

A chloroplast-targeting transit peptide spans 1–56; the sequence is MAMAAAASLLPASAAPTLPGRAFRPPRNSTPTASLSCDGGSRCRGVGLGVILGGCR. Residues 72-189 enclose the Thioredoxin domain; the sequence is GSGKYIAPDY…MIRNIIDNEL (118 aa). Residues Cys112 and Cys115 each act as nucleophile in the active site. The cysteines at positions 112 and 115 are disulfide-linked.

It belongs to the thioredoxin family. Plant CITRX-type subfamily.

The protein localises to the plastid. It is found in the chloroplast. Its function is as follows. Probable thiol-disulfide oxidoreductase that may play a role in proper chloroplast development. This is Thioredoxin-like protein CITRX, chloroplastic from Oryza sativa subsp. japonica (Rice).